The chain runs to 652 residues: DNA ligase (652 aa).

Residues 29-33, 78-79, and Glu107 contribute to the NAD(+) site; these read DSEYD and SL. Lys109 acts as the N6-AMP-lysine intermediate in catalysis. Residues Arg130, Glu164, Lys278, and Lys302 each contribute to the NAD(+) site. 4 residues coordinate Zn(2+): Cys395, Cys398, Cys413, and Cys418. The region spanning 577–652 is the BRCT domain; the sequence is VADAALSGLT…VRDEAWLESL (76 aa).

It belongs to the NAD-dependent DNA ligase family. LigA subfamily. It depends on Mg(2+) as a cofactor. Mn(2+) serves as cofactor.

The catalysed reaction is NAD(+) + (deoxyribonucleotide)n-3'-hydroxyl + 5'-phospho-(deoxyribonucleotide)m = (deoxyribonucleotide)n+m + AMP + beta-nicotinamide D-nucleotide.. Functionally, DNA ligase that catalyzes the formation of phosphodiester linkages between 5'-phosphoryl and 3'-hydroxyl groups in double-stranded DNA using NAD as a coenzyme and as the energy source for the reaction. It is essential for DNA replication and repair of damaged DNA. This Streptococcus pneumoniae (strain Hungary19A-6) protein is DNA ligase.